Here is a 163-residue protein sequence, read N- to C-terminus: NADH-quinone oxidoreductase subunit I (163 aa).

4Fe-4S ferredoxin-type domains are found at residues 54–84 (LRRY…IESD) and 94–123 (TRYD…ETHI). [4Fe-4S] cluster contacts are provided by Cys64, Cys67, Cys70, Cys74, Cys103, Cys106, Cys109, and Cys113.

Belongs to the complex I 23 kDa subunit family. As to quaternary structure, NDH-1 is composed of 14 different subunits. Subunits NuoA, H, J, K, L, M, N constitute the membrane sector of the complex. The cofactor is [4Fe-4S] cluster.

The protein resides in the cell inner membrane. It catalyses the reaction a quinone + NADH + 5 H(+)(in) = a quinol + NAD(+) + 4 H(+)(out). Its function is as follows. NDH-1 shuttles electrons from NADH, via FMN and iron-sulfur (Fe-S) centers, to quinones in the respiratory chain. The immediate electron acceptor for the enzyme in this species is believed to be ubiquinone. Couples the redox reaction to proton translocation (for every two electrons transferred, four hydrogen ions are translocated across the cytoplasmic membrane), and thus conserves the redox energy in a proton gradient. This chain is NADH-quinone oxidoreductase subunit I, found in Cupriavidus metallidurans (strain ATCC 43123 / DSM 2839 / NBRC 102507 / CH34) (Ralstonia metallidurans).